Here is a 239-residue protein sequence, read N- to C-terminus: 7-cyano-7-deazaguanine synthase (239 aa).

13–23 (LSGGQDSATCL) serves as a coordination point for ATP. Zn(2+) is bound by residues C199, C214, C217, and C220.

The protein belongs to the QueC family. Requires Zn(2+) as cofactor.

It catalyses the reaction 7-carboxy-7-deazaguanine + NH4(+) + ATP = 7-cyano-7-deazaguanine + ADP + phosphate + H2O + H(+). It functions in the pathway purine metabolism; 7-cyano-7-deazaguanine biosynthesis. Functionally, catalyzes the ATP-dependent conversion of 7-carboxy-7-deazaguanine (CDG) to 7-cyano-7-deazaguanine (preQ(0)). The polypeptide is 7-cyano-7-deazaguanine synthase (Acidovorax ebreus (strain TPSY) (Diaphorobacter sp. (strain TPSY))).